The primary structure comprises 396 residues: Seminal vesicle major clotting proteins (396 aa).

A signal peptide spans 1–21 (MKSTIFFILSLLLMLENQAAG). Residues 45 to 178 (MEEAVSGSGL…ASSVDHRKKG (134 aa)) are disordered. A compositionally biased stretch (basic and acidic residues) spans 60–152 (RGSDREESVG…RVSVRHERVE (93 aa)). SVP-3/-4 repeat repeat units lie at residues 65 to 88 (EESV…RSSV), 89 to 112 (EEPE…RHNV), and 113 to 136 (EEPE…RHSA). The SVP-3/-4 repeat; truncated repeat unit spans residues 137 to 157 (EEPEGERVSVRHERVEKTHKR). The propeptide occupies 177–192 (KGHIRFKRQDPIAALA). SVP-1 clotting repeat units follow at residues 194–217 (IEGQ…ERFS), 218–241 (VKGQ…ERFS), 242–265 (VTGQ…ERFS), 266–289 (MTGQ…ERFS), 290–313 (MTGQ…ERFS), 314–337 (VTGQ…ERFS), 338–361 (VTGQ…ERFS), and 362–385 (VSGQ…SGFS). A 9 X tandem repeats of SVP-1 like motif region spans residues 194 to 396 (IEGQDAVKDS…KGQGSLKGLI (203 aa)). Positions 377–396 (QESVQSGFSVKGQGSLKGLI) are disordered. The SVP-1 clotting 9; truncated repeat unit spans residues 386 to 396 (VKGQGSLKGLI).

To the SVP-2 precursor, particularly in regions where protein processing must occur. In terms of processing, SVP-3 may be a post-translationally modified form of SVP-4. Post-translationally, covalent clotting of SVP-1 is catalyzed by a transglutaminase secreted by the anterior prostate through the formation of gamma-glutamyl-epsilon-lysine cross-links. The conserved 2 Lys and 1 Gln residues per functional unit seem to be the residues involved in the formation of those cross-links.

Its subcellular location is the secreted. Functionally, SVP-1 serves as substrate in the formation of the copulatory plug. SVP-3 and SVP-4 may also contribute to the clot. The protein is Seminal vesicle major clotting proteins of Cavia porcellus (Guinea pig).